A 170-amino-acid polypeptide reads, in one-letter code: Photosystem I assembly protein Ycf3 (170 aa).

3 TPR repeats span residues 35 to 68 (AFTYYRDGMSAQAEGEYAEALQNYYEAMRLEVDA), 72 to 105 (SYILYNIGLIHTSNGEHGRALEYYYQALERNPSL), and 120 to 153 (GEQAIENGQSEISQILFEKAADYWKEAIRLAPTN).

It belongs to the Ycf3 family.

Its subcellular location is the plastid. It is found in the chloroplast thylakoid membrane. Functionally, essential for the assembly of the photosystem I (PSI) complex. May act as a chaperone-like factor to guide the assembly of the PSI subunits. The chain is Photosystem I assembly protein Ycf3 from Tetradesmus obliquus (Green alga).